We begin with the raw amino-acid sequence, 118 residues long: D-dopachrome decarboxylase (118 aa).

N-acetylproline is present on proline 2.

This sequence belongs to the MIF family. In terms of assembly, homotrimer.

It is found in the cytoplasm. The catalysed reaction is D-dopachrome + H(+) = 5,6-dihydroxyindole + CO2. Tautomerization of D-dopachrome with decarboxylation to give 5,6-dihydroxyindole (DHI). The polypeptide is D-dopachrome decarboxylase (DDT) (Gallus gallus (Chicken)).